Consider the following 194-residue polypeptide: Potassium-transporting ATPase KdpC subunit (194 aa).

Residues 12 to 34 form a helical membrane-spanning segment; that stretch reads LFLLLLTGGVYPLLTTALGQWWF.

It belongs to the KdpC family. The system is composed of three essential subunits: KdpA, KdpB and KdpC.

It localises to the cell inner membrane. Functionally, part of the high-affinity ATP-driven potassium transport (or Kdp) system, which catalyzes the hydrolysis of ATP coupled with the electrogenic transport of potassium into the cytoplasm. This subunit acts as a catalytic chaperone that increases the ATP-binding affinity of the ATP-hydrolyzing subunit KdpB by the formation of a transient KdpB/KdpC/ATP ternary complex. This chain is Potassium-transporting ATPase KdpC subunit, found in Salmonella choleraesuis (strain SC-B67).